We begin with the raw amino-acid sequence, 574 residues long: Serine hydroxymethyltransferase (574 aa).

Glycine 180 to leucine 182 contacts (6S)-5,6,7,8-tetrahydrofolate. An N6-(pyridoxal phosphate)lysine modification is found at lysine 288. A (6S)-5,6,7,8-tetrahydrofolate-binding site is contributed by glutamate 306.

Belongs to the SHMT family. As to quaternary structure, homodimer. Pyridoxal 5'-phosphate serves as cofactor.

It localises to the cytoplasm. The catalysed reaction is (6R)-5,10-methylene-5,6,7,8-tetrahydrofolate + glycine + H2O = (6S)-5,6,7,8-tetrahydrofolate + L-serine. It participates in one-carbon metabolism; tetrahydrofolate interconversion. The protein operates within amino-acid biosynthesis; glycine biosynthesis; glycine from L-serine: step 1/1. Functionally, catalyzes the reversible interconversion of serine and glycine with tetrahydrofolate (THF) serving as the one-carbon carrier. This reaction serves as the major source of one-carbon groups required for the biosynthesis of purines, thymidylate, methionine, and other important biomolecules. Also exhibits THF-independent aldolase activity toward beta-hydroxyamino acids, producing glycine and aldehydes, via a retro-aldol mechanism. The sequence is that of Serine hydroxymethyltransferase from Treponema pallidum (strain Nichols).